Consider the following 387-residue polypeptide: F420-dependent formate dehydrogenase 1 subunit beta (387 aa).

4Fe-4S ferredoxin-type domains are found at residues 275 to 298 and 326 to 355; these read TIEEWNRQWNKCIKCYGCRDVCPV and VRMSHMAFSCVNCGQCEDVCPMEIPVARIF. The [4Fe-4S] cluster site is built by Cys286, Cys289, Cys292, Cys296, Cys335, Cys338, Cys341, and Cys345. Residues 366-387 are disordered; sequence LGYRPGVDDEAPPALGGSCPTQ.

Belongs to the FrhB family. In terms of assembly, dimer of an alpha (FdhA1) and a beta (FdhB1) subunit. [4Fe-4S] cluster serves as cofactor. The cofactor is FAD. Zn(2+) is required as a cofactor.

It catalyses the reaction oxidized coenzyme F420-(gamma-L-Glu)(n) + formate + 2 H(+) = reduced coenzyme F420-(gamma-L-Glu)(n) + CO2. Functionally, catalyzes the oxidation of formate to carbon dioxide, with coenzyme F420 as the electron acceptor. In vitro can also use methyl viologen as electron acceptor. This is F420-dependent formate dehydrogenase 1 subunit beta from Methanococcus maripaludis (strain DSM 14266 / JCM 13030 / NBRC 101832 / S2 / LL).